The chain runs to 221 residues: Endo-1,4-beta-xylanase 2 (221 aa).

The N-terminal stretch at 1-19 is a signal peptide; the sequence is MVAFTSLLAGFAAIAGVLS. Positions 32 to 221 constitute a GH11 domain; the sequence is QTIGPGTGYS…SSGSASITVS (190 aa). N-linked (GlcNAc...) asparagine glycosylation is found at Asn-69 and Asn-92. Residue Glu-117 is the Nucleophile of the active site. Glu-208 acts as the Proton donor in catalysis.

This sequence belongs to the glycosyl hydrolase 11 (cellulase G) family.

The protein resides in the secreted. It carries out the reaction Endohydrolysis of (1-&gt;4)-beta-D-xylosidic linkages in xylans.. It functions in the pathway glycan degradation; xylan degradation. In terms of biological role, endo-1,4-beta-xylanase involved in the hydrolysis of xylan, a major structural heterogeneous polysaccharide found in plant biomass representing the second most abundant polysaccharide in the biosphere, after cellulose. This is Endo-1,4-beta-xylanase 2 (Xyn2) from Trichoderma harzianum (Hypocrea lixii).